Here is a 603-residue protein sequence, read N- to C-terminus: Geraniol synthase Tps-5073G30, chloroplastic (603 aa).

A chloroplast-targeting transit peptide spans methionine 1–serine 35. Residues arginine 319, aspartate 356, aspartate 360, arginine 497, and aspartate 500 each contribute to the (2E)-geranyl diphosphate site. Residues aspartate 356 and aspartate 360 each contribute to the Mg(2+) site. The DDXXD motif signature appears at aspartate 356–aspartate 360. Aspartate 500, threonine 504, and glutamate 508 together coordinate Mg(2+).

This sequence belongs to the terpene synthase family. Tpsb subfamily. As to quaternary structure, monomer. Mg(2+) serves as cofactor. Requires Mn(2+) as cofactor.

It is found in the plastid. The protein resides in the chloroplast. The enzyme catalyses (2E)-geranyl diphosphate + H2O = (2E)-geraniol + diphosphate. The protein operates within secondary metabolite biosynthesis; terpenoid biosynthesis. In terms of biological role, monoterpene synthase (mono-TPS) involved in the biosynthesis of monoterpenes natural products. Catalyzes the conversion of (2E)-geranyl diphosphate (GPP) into geraniol. This Perilla frutescens (Beefsteak mint) protein is Geraniol synthase Tps-5073G30, chloroplastic.